Here is a 348-residue protein sequence, read N- to C-terminus: Heat-inducible transcription repressor HrcA (348 aa).

The protein belongs to the HrcA family.

In terms of biological role, negative regulator of class I heat shock genes (grpE-dnaK-dnaJ and groELS operons). Prevents heat-shock induction of these operons. The protein is Heat-inducible transcription repressor HrcA of Lacticaseibacillus casei (strain BL23) (Lactobacillus casei).